The sequence spans 190 residues: Flavodoxin-like domain-containing protein BilS (190 aa).

Its pathway is porphyrin-containing compound metabolism; protoheme degradation. Its function is as follows. Together with BilR, catalyzes reduction of mesobilirubin and/or bilirubin to urobilinogen, a key step during heme degradation. BilS is probably involved in electron transfer for the bilirubin reductase BilR. This chain is Flavodoxin-like domain-containing protein BilS, found in Clostridium symbiosum (strain WAL-14163).